The following is a 187-amino-acid chain: Adenine phosphoribosyltransferase (187 aa).

It belongs to the purine/pyrimidine phosphoribosyltransferase family. As to quaternary structure, homodimer.

The protein localises to the cytoplasm. It carries out the reaction AMP + diphosphate = 5-phospho-alpha-D-ribose 1-diphosphate + adenine. Its pathway is purine metabolism; AMP biosynthesis via salvage pathway; AMP from adenine: step 1/1. Catalyzes a salvage reaction resulting in the formation of AMP, that is energically less costly than de novo synthesis. This chain is Adenine phosphoribosyltransferase, found in Burkholderia pseudomallei (strain 668).